Consider the following 286-residue polypeptide: MKDDLFIALQRIIPHHAFSRLVGWFAATKIRWIKHLFITKFINAYNVNMAEALEPNPENYANFNDFFVRALKPDARPIASEANAIVSPADGAVSQLGEISGDKIFQAKNHWFSIKELLACDDELAEQFMGGSFATIYLSPSDYHRVHMPAAGLLTQMNYIPGDLFSVNPVTTENVAGLFARNERIAAIFDTEFGPMAVVMVGAMIVASIETVWDGQITPASREVKRNVYSKPREIKLGKGDEMGRFKLGSTAVLLFPKGAIKWKEDIKAETTLRMGEMIAELQTQA.

Active-site charge relay system; for autoendoproteolytic cleavage activity residues include D90, H147, and S250. The Schiff-base intermediate with substrate; via pyruvic acid; for decarboxylase activity role is filled by S250. S250 bears the Pyruvic acid (Ser); by autocatalysis mark.

Belongs to the phosphatidylserine decarboxylase family. PSD-B subfamily. Prokaryotic type I sub-subfamily. As to quaternary structure, heterodimer of a large membrane-associated beta subunit and a small pyruvoyl-containing alpha subunit. Pyruvate is required as a cofactor. Post-translationally, is synthesized initially as an inactive proenzyme. Formation of the active enzyme involves a self-maturation process in which the active site pyruvoyl group is generated from an internal serine residue via an autocatalytic post-translational modification. Two non-identical subunits are generated from the proenzyme in this reaction, and the pyruvate is formed at the N-terminus of the alpha chain, which is derived from the carboxyl end of the proenzyme. The autoendoproteolytic cleavage occurs by a canonical serine protease mechanism, in which the side chain hydroxyl group of the serine supplies its oxygen atom to form the C-terminus of the beta chain, while the remainder of the serine residue undergoes an oxidative deamination to produce ammonia and the pyruvoyl prosthetic group on the alpha chain. During this reaction, the Ser that is part of the protease active site of the proenzyme becomes the pyruvoyl prosthetic group, which constitutes an essential element of the active site of the mature decarboxylase.

Its subcellular location is the cell membrane. The enzyme catalyses a 1,2-diacyl-sn-glycero-3-phospho-L-serine + H(+) = a 1,2-diacyl-sn-glycero-3-phosphoethanolamine + CO2. It functions in the pathway phospholipid metabolism; phosphatidylethanolamine biosynthesis; phosphatidylethanolamine from CDP-diacylglycerol: step 2/2. Catalyzes the formation of phosphatidylethanolamine (PtdEtn) from phosphatidylserine (PtdSer). This Saccharophagus degradans (strain 2-40 / ATCC 43961 / DSM 17024) protein is Phosphatidylserine decarboxylase proenzyme.